The chain runs to 130 residues: Glycine cleavage system H protein (130 aa).

The Lipoyl-binding domain maps to 24 to 106 (IYSVGITEHA…YADGWLFRIR (83 aa)). Lys65 carries the N6-lipoyllysine modification.

The protein belongs to the GcvH family. The glycine cleavage system is composed of four proteins: P, T, L and H. (R)-lipoate is required as a cofactor.

Its function is as follows. The glycine cleavage system catalyzes the degradation of glycine. The H protein shuttles the methylamine group of glycine from the P protein to the T protein. The polypeptide is Glycine cleavage system H protein (Pectobacterium carotovorum subsp. carotovorum (strain PC1)).